Here is a 117-residue protein sequence, read N- to C-terminus: Large ribosomal subunit protein bL19 (117 aa).

The protein belongs to the bacterial ribosomal protein bL19 family.

In terms of biological role, this protein is located at the 30S-50S ribosomal subunit interface and may play a role in the structure and function of the aminoacyl-tRNA binding site. In Sorangium cellulosum (strain So ce56) (Polyangium cellulosum (strain So ce56)), this protein is Large ribosomal subunit protein bL19.